Reading from the N-terminus, the 567-residue chain is Diacylglycerol kinase epsilon (567 aa).

A helical membrane pass occupies residues 22 to 42; the sequence is LILWTLCSVLLPVFITFWCSL. 2 consecutive Phorbol-ester/DAG-type zinc fingers follow at residues 59–108 and 124–177; these read KHGW…RFQC and PHHW…NEKC. The region spanning 215 to 356 is the DAGKc domain; it reads KQWTPLIILA…LDRWKVQVTN (142 aa).

Belongs to the eukaryotic diacylglycerol kinase family. As to expression, expressed predominantly in testis. Expressed in endothelium, platelets and podocytes (at protein level).

Its subcellular location is the membrane. The protein localises to the cytoplasm. The catalysed reaction is a 1,2-diacyl-sn-glycerol + ATP = a 1,2-diacyl-sn-glycero-3-phosphate + ADP + H(+). The enzyme catalyses 1-hexadecanoyl-2-(5Z,8Z,11Z,14Z-eicosatetraenoyl)-sn-glycerol + ATP = 1-hexadecanoyl-2-(5Z,8Z,11Z,14Z-eicosatetraenoyl)-sn-glycero-3-phosphate + ADP + H(+). It carries out the reaction 1-octadecanoyl-2-(5Z,8Z,11Z,14Z-eicosatetraenoyl)-sn-glycerol + ATP = 1-octadecanoyl-2-(5Z,8Z,11Z,14Z-eicosatetraenoyl)-sn-glycero-3-phosphate + ADP + H(+). It catalyses the reaction 1-eicosanoyl-2-(5Z,8Z,11Z,14Z)-eicosatetraenoyl-sn-glycerol + ATP = 1-eicosanoyl-2-(5Z,8Z,11Z,14Z)-eicosatetraenoyl-sn-glycero-3-phosphate + ADP + H(+). The catalysed reaction is 1,2-di-(5Z,8Z,11Z,14Z)-eicosatetraenoyl-sn-glycerol + ATP = 1,2-di-(5Z,8Z,11Z,14Z)-eicosatetraenoyl-sn-glycero-3-phosphate + ADP + H(+). The enzyme catalyses 1-octadecanoyl-2-(9Z,12Z)-octadecadienoyl-sn-glycerol + ATP = 1-octadecanoyl-2-(9Z,12Z-octadecadienoyl)-sn-glycero-3-phosphate + ADP + H(+). It carries out the reaction 1,2-di-(9Z,12Z-octadecadienoyl)-sn-glycerol + ATP = 1,2-di-(9Z,12Z-octadecadienoyl)-sn-glycero-3-phosphate + ADP + H(+). It catalyses the reaction 1,2-di-(9Z-octadecenoyl)-sn-glycerol + ATP = 1,2-di-(9Z-octadecenoyl)-sn-glycero-3-phosphate + ADP + H(+). The protein operates within lipid metabolism; glycerolipid metabolism. With respect to regulation, undergoes competitive inhibition by its own product 1,2-diacyl-sn-glycero-3-phosphate/phosphatidic acid. The strongest inhibition being observed in vitro with 1-octadecanoyl-2-(5Z,8Z,11Z,14Z-eicosatetraenoyl)-sn-glycero-3-phosphate, a major intermediate in the phosphatidylinositol turnover cycle and more generally by diacylglycerols with an arachidonoyl acyl chain at the sn-2 position. Its function is as follows. Membrane-bound diacylglycerol kinase that converts diacylglycerol/DAG into phosphatidic acid/phosphatidate/PA and regulates the respective levels of these two bioactive lipids. Thereby, acts as a central switch between the signaling pathways activated by these second messengers with different cellular targets and opposite effects in numerous biological processes. Also plays an important role in the biosynthesis of complex lipids. Displays specificity for diacylglycerol substrates with an arachidonoyl acyl chain at the sn-2 position, with the highest activity toward 1-octadecanoyl-2-(5Z,8Z,11Z,14Z-eicosatetraenoyl)-sn-glycerol the main diacylglycerol intermediate within the phosphatidylinositol turnover cycle. Can also phosphorylate diacylglycerol substrates with a linoleoyl acyl chain at the sn-2 position but much less efficiently. The chain is Diacylglycerol kinase epsilon (DGKE) from Homo sapiens (Human).